A 579-amino-acid polypeptide reads, in one-letter code: Glutamine--tRNA ligase (579 aa).

The 'HIGH' region motif lies at P41–H51. ATP is bound by residues E42–N44 and H48–A54. Residues D74 and Y218 each contribute to the L-glutamine site. ATP is bound by residues T237, R285–L286, and M293–K295. Residues V292–R296 carry the 'KMSKS' region motif.

It belongs to the class-I aminoacyl-tRNA synthetase family. In terms of assembly, monomer.

Its subcellular location is the cytoplasm. The catalysed reaction is tRNA(Gln) + L-glutamine + ATP = L-glutaminyl-tRNA(Gln) + AMP + diphosphate. The sequence is that of Glutamine--tRNA ligase from Xanthomonas oryzae pv. oryzae (strain MAFF 311018).